Here is a 179-residue protein sequence, read N- to C-terminus: Monothiol glutaredoxin-S12, chloroplastic (179 aa).

The transit peptide at 1-61 directs the protein to the chloroplast; that stretch reads MVAATVNLAN…WPPLRCSSVK (61 aa). Ala62 is subject to N-acetylalanine. The region spanning 75 to 176 is the Glutaredoxin domain; it reads EETVKTTVAE…AILAEANGKN (102 aa). A [2Fe-2S] cluster-binding site is contributed by Cys95.

This sequence belongs to the glutaredoxin family. CPYC subfamily.

It localises to the plastid. The protein localises to the chloroplast. May only reduce GSH-thiol disulfides, but not protein disulfides. The protein is Monothiol glutaredoxin-S12, chloroplastic (GRXS12) of Arabidopsis thaliana (Mouse-ear cress).